The following is a 398-amino-acid chain: Cysteine protease ATG4A (398 aa).

Cys-77 functions as the Nucleophile in the catalytic mechanism. Catalysis depends on residues Asp-279 and His-281. The LIR motif lies at Phe-393–Leu-396.

It belongs to the peptidase C54 family. In terms of assembly, interacts with ATG9A; the interaction is direct.

It is found in the cytoplasm. It carries out the reaction [protein]-C-terminal L-amino acid-glycyl-phosphatidylethanolamide + H2O = [protein]-C-terminal L-amino acid-glycine + a 1,2-diacyl-sn-glycero-3-phosphoethanolamine. With respect to regulation, inhibited by N-ethylmaleimide. Redox-regulated during autophagy since reducing conditions activate ATG4A whereas an oxidizing environment such as the presence of H(2)O(2) inhibits its activity. Cysteine protease that plays a key role in autophagy by mediating both proteolytic activation and delipidation of ATG8 family proteins. The protease activity is required for proteolytic activation of ATG8 family proteins: cleaves the C-terminal amino acid of ATG8 proteins to reveal a C-terminal glycine. Exposure of the glycine at the C-terminus is essential for ATG8 proteins conjugation to phosphatidylethanolamine (PE) and insertion to membranes, which is necessary for autophagy. Preferred substrate is GABARAPL2 followed by MAP1LC3A and GABARAP. Protease activity is also required to counteract formation of high-molecular weight conjugates of ATG8 proteins (ATG8ylation): acts as a deubiquitinating-like enzyme that removes ATG8 conjugated to other proteins, such as ATG3. In addition to the protease activity, also mediates delipidation of ATG8 family proteins. Catalyzes delipidation of PE-conjugated forms of ATG8 proteins during macroautophagy. Compared to ATG4B, the major protein for proteolytic activation of ATG8 proteins, shows weaker ability to cleave the C-terminal amino acid of ATG8 proteins, while it displays stronger delipidation activity. Involved in phagophore growth during mitophagy independently of its protease activity and of ATG8 proteins: acts by regulating ATG9A trafficking to mitochondria and promoting phagophore-endoplasmic reticulum contacts during the lipid transfer phase of mitophagy. This chain is Cysteine protease ATG4A, found in Homo sapiens (Human).